A 411-amino-acid chain; its full sequence is C6 finger domain transcription factor hasA (411 aa).

Residues 1–17 (MTSTLPYLTSPPATHPS) show a composition bias toward polar residues. The interval 1–21 (MTSTLPYLTSPPATHPSNSDH) is disordered. A DNA-binding region (zn(2)-C6 fungal-type) is located at residues 28–54 (CDSCHQCKVKCSGGSPCFRCTSKGLNC).

The protein localises to the nucleus. Functionally, transcription factor; part of the gene cluster that mediates the biosynthesis of hexadehydro-astechrome (HAS), a tryptophan-derived iron(III)-complex that acts as a virulence factor in infected mice. Positively regulates the expression of the HAS biosynthetic genes. This Aspergillus fumigatus (strain CBS 144.89 / FGSC A1163 / CEA10) (Neosartorya fumigata) protein is C6 finger domain transcription factor hasA.